Reading from the N-terminus, the 435-residue chain is Adenylosuccinate synthetase (435 aa).

GTP contacts are provided by residues 17-23 (GDEGKGK) and 45-47 (GHT). The Proton acceptor role is filled by aspartate 18. Mg(2+) is bound by residues aspartate 18 and glycine 45. Residues 18-21 (DEGK), 43-46 (NAGH), threonine 134, arginine 148, glutamine 229, threonine 244, and arginine 308 contribute to the IMP site. Histidine 46 serves as the catalytic Proton donor. Substrate is bound at residue 304-310 (SVTGRPR). Residues arginine 310, 336–338 (KLD), and 418–420 (STG) each bind GTP.

Belongs to the adenylosuccinate synthetase family. As to quaternary structure, homodimer. Requires Mg(2+) as cofactor.

Its subcellular location is the cytoplasm. The enzyme catalyses IMP + L-aspartate + GTP = N(6)-(1,2-dicarboxyethyl)-AMP + GDP + phosphate + 2 H(+). It participates in purine metabolism; AMP biosynthesis via de novo pathway; AMP from IMP: step 1/2. Plays an important role in the de novo pathway of purine nucleotide biosynthesis. Catalyzes the first committed step in the biosynthesis of AMP from IMP. This chain is Adenylosuccinate synthetase, found in Bordetella parapertussis (strain 12822 / ATCC BAA-587 / NCTC 13253).